The sequence spans 1671 residues: DNA polymerase (1671 aa).

Positions 135 to 326 (LKMLAFDIET…KVTYELGKEF (192 aa)) are 3'-5' exonuclease. In terms of domain architecture, DOD-type homing endonuclease 1 spans 524 to 665 (LAGILLAEGT…VSKLLSQLGI (142 aa)). A disulfide bridge connects residues Cys-788 and Cys-802. Residues 1132-1265 (LLGYYVSEGY…LVLLLNSVGV (134 aa)) form the DOD-type homing endonuclease 2 domain. A disulfide bridge connects residues Cys-1403 and Cys-1406.

It belongs to the DNA polymerase type-B family. Post-translationally, undergoes a protein self splicing that involves a post-translational excision of the intervening region (intein) followed by peptide ligation.

It carries out the reaction DNA(n) + a 2'-deoxyribonucleoside 5'-triphosphate = DNA(n+1) + diphosphate. Functionally, has high processivity, a high polymerization rate and high fidelity. In addition to polymerase activity, also exhibits 3' to 5' exonuclease activity. In terms of biological role, intein encoded endonucleases are thought to mediate intein mobility by site-specific recombination initiated by endonuclease cleavage at the 'homing site' in genes that lack the intein. Upon expression in E.coli PI-PkoI recognizes the minimal sequence 5'-GATTTTAGATCCCTGTACC-3' and cuts after T-10. PI-PkoII recognizes the minimal sequence 5'-CAGCTACTACGGTTAC-3' and cuts after C-10. Given the high intracellular K(+) content (&gt;0.5 M), PI-PkoII is probably more active than PI-PkoI in vivo. This Thermococcus kodakarensis (strain ATCC BAA-918 / JCM 12380 / KOD1) (Pyrococcus kodakaraensis (strain KOD1)) protein is DNA polymerase (pol).